The primary structure comprises 377 residues: F-box protein At1g11810 (377 aa).

Positions 2-48 constitute an F-box domain; it reads TTTMSTLPVVLVDEILARVPITSLRSLRSTCKKWEASSKTNLVGGKA.

The protein is F-box protein At1g11810 of Arabidopsis thaliana (Mouse-ear cress).